Reading from the N-terminus, the 486-residue chain is Small ribosomal subunit protein uS17B (486 aa).

The tract at residues 1–112 (MRDIGINGIK…IENKSNINFV (112 aa)) is 30S ribosomal protein S17. Positions 113-486 (DNLLNVDDKW…ELWTRKNYKS (374 aa)) are unknown.

It belongs to the universal ribosomal protein uS17 family. Part of the 30S ribosomal subunit.

Functionally, one of the primary rRNA binding proteins, it binds specifically to the 5'-end of 16S ribosomal RNA. This chain is Small ribosomal subunit protein uS17B, found in Methanosarcina acetivorans (strain ATCC 35395 / DSM 2834 / JCM 12185 / C2A).